Consider the following 647-residue polypeptide: MEVKGKKKFTGKSPQTSQGKNKFHKNSESSSSKTFPRKAVKEGGPKVTSKNFEKGATKPGKKGVKQFKNKPQGGKGPKDKFQKANKFSKKRKFQPDGESDESGAKKPKWDDFKKKKKELKQSRQLSDKTNYDIVVRAKHIWESLRRKDCDKEKRVKLMSDLQKLIQGKIKTIAFAHDSTRVIQCFIQYGNEEQRKQAFQELQGDLVELSKAKYSRNIVKKFLMYGSKPQVAEIIRSFKGHVRKMLRHSEASAIVEYAYNDKAILEQRNMLTEELYGNTFQLYKSADHPTLDKVLELQPAKLELIMDEMKQILTPMAQKEAVIKHSLVHKVFLDFFTYAPPKPRSELIEAIREAVVYLAHTHDGARVAMHCLWHGTPKDRKVIVKTMKTYVEKVANGQYSHLVLLAAFDCIDDTKLVKQIIISEIISSLPSIVNDKYGRKVLLYLMSPRDPAHTVPELIELLQKGDGNAHSKKDTAIRRRELLESISPALLSYLQGHTQEVVLDKSACVLVSDMLGSATGDVQPAMDAIASLAAAELHPGGKDGELHVAEHPAGHLVLKWLLEQDKKMKESGKEGCFAKTLVERVGMKNLKSWASINRGAIILSSLLQSCDQEVVNKVKGGLKPLIPTLEKNKSSSRGIQTLLEKLTA.

Basic residues predominate over residues 1-10; sequence MEVKGKKKFT. The disordered stretch occupies residues 1-123; sequence MEVKGKKKFT…KKKKELKQSR (123 aa). At K33 the chain carries N6-acetyllysine. Positions 59–68 are enriched in basic residues; sequence PGKKGVKQFK. The segment covering 102–123 has biased composition (basic and acidic residues); the sequence is SGAKKPKWDDFKKKKKELKQSR. The short motif at 105-117 is the Nuclear localization signal element; the sequence is KKPKWDDFKKKKK. Residues 142–509 form the PUM-HD domain; sequence ESLRRKDCDK…VVLDKSACVL (368 aa). Pumilio repeat units lie at residues 176-211, 212-247, 248-276, 288-324, 325-360, 361-396, 397-434, 435-503, 504-550, 551-595, and 596-635; these read HDST…LSKA, KYSR…MLRH, SEAS…ELYG, PTLD…VIKH, SLVH…LAHT, HDGA…VANG, QYSH…IVND, KYGR…VVLD, KSAC…VAEH, PAGH…WASI, and NRGA…KSSS.

As to quaternary structure, interacts with PARP1 (via catalytic domain). As to expression, in the adult eye, expressed primarily in retinal ganglion cells and, to a lesser extent, in the pigmented cells.

The protein localises to the nucleus. It localises to the nucleolus. The protein resides in the nucleoplasm. Its subcellular location is the chromosome. Inhibits the poly(ADP-ribosyl)ation activity of PARP1 and the degradation of PARP1 by CASP3 following genotoxic stress. Binds to double-stranded RNA or DNA without sequence specificity. Involved in development of the eye and of primordial germ cells. The chain is Pumilio homolog 3 from Mus musculus (Mouse).